Consider the following 430-residue polypeptide: 3-phosphoshikimate 1-carboxyvinyltransferase (430 aa).

Residues K25, S26, and R30 each coordinate 3-phosphoshikimate. Residue K25 coordinates phosphoenolpyruvate. Phosphoenolpyruvate is bound by residues G98 and R126. 3-phosphoshikimate is bound by residues S169, S170, Q171, S198, E313, and H342. Q171 is a binding site for phosphoenolpyruvate. E313 serves as the catalytic Proton acceptor. Phosphoenolpyruvate contacts are provided by R346, R387, and K412.

Belongs to the EPSP synthase family. As to quaternary structure, monomer.

The protein localises to the cytoplasm. The enzyme catalyses 3-phosphoshikimate + phosphoenolpyruvate = 5-O-(1-carboxyvinyl)-3-phosphoshikimate + phosphate. It participates in metabolic intermediate biosynthesis; chorismate biosynthesis; chorismate from D-erythrose 4-phosphate and phosphoenolpyruvate: step 6/7. Catalyzes the transfer of the enolpyruvyl moiety of phosphoenolpyruvate (PEP) to the 5-hydroxyl of shikimate-3-phosphate (S3P) to produce enolpyruvyl shikimate-3-phosphate and inorganic phosphate. This is 3-phosphoshikimate 1-carboxyvinyltransferase from Mycobacterium leprae (strain TN).